The primary structure comprises 317 residues: Melanocyte-stimulating hormone receptor (317 aa).

The Extracellular segment spans residues methionine 1 to glutamate 37. An N-linked (GlcNAc...) asparagine glycan is attached at asparagine 29. The chain crosses the membrane as a helical span at residues valine 38–isoleucine 63. The Cytoplasmic segment spans residues alanine 64 to proline 72. A helical transmembrane segment spans residues methionine 73–leucine 93. Over glutamate 94–asparagine 118 the chain is Extracellular. A helical transmembrane segment spans residues valine 119–valine 140. At aspartate 141–arginine 163 the chain is on the cytoplasmic side. The helical transmembrane segment at alanine 164 to tyrosine 183 threads the bilayer. At aspartate 184 to cysteine 191 the chain is on the extracellular side. A helical transmembrane segment spans residues leucine 192 to leucine 211. Topologically, residues alanine 212–alanine 240 are cytoplasmic. The helical transmembrane segment at alanine 241 to leucine 266 threads the bilayer. The Extracellular segment spans residues cysteine 267–asparagine 279. The helical transmembrane segment at phenylalanine 280–phenylalanine 300 threads the bilayer. Topologically, residues arginine 301–tryptophan 317 are cytoplasmic. A lipid anchor (S-palmitoyl cysteine) is attached at cysteine 315.

Belongs to the G-protein coupled receptor 1 family. As to quaternary structure, interacts with MGRN1, but does not undergo MGRN1-mediated ubiquitination; this interaction competes with GNAS-binding and thus inhibits agonist-induced cAMP production. Interacts with OPN3; the interaction results in a decrease in MC1R-mediated cAMP signaling and ultimately a decrease in melanin production in melanocytes.

It is found in the cell membrane. Functionally, receptor for MSH (alpha, beta and gamma) and ACTH. The activity of this receptor is mediated by G proteins which activate adenylate cyclase. Mediates melanogenesis, the production of eumelanin (black/brown) and phaeomelanin (red/yellow), via regulation of cAMP signaling in melanocytes. The protein is Melanocyte-stimulating hormone receptor (MC1R) of Chlorocebus aethiops (Green monkey).